The following is a 498-amino-acid chain: uncharacterized protein (498 aa).

The signal sequence occupies residues 1-26 (MEESSMAQASLICLLLSFSIIMLSNA). The Extracellular portion of the chain corresponds to 27–441 (ADISIDCGSS…GEEKSSSNLA (415 aa)). N-linked (GlcNAc...) asparagine glycans are attached at residues Asn-44, Asn-150, Asn-354, and Asn-357. Residues 351 to 439 (GSGNGTNSTS…KSGEEKSSSN (89 aa)) are disordered. The segment covering 362–414 (SGGGSPSPGGGSGSPPSTGGGSGSPPSTGGGGGSPSKGGGGGKSGGSNNGDGG) has biased composition (gly residues). A compositionally biased stretch (basic and acidic residues) spans 418–436 (ASEDEKSADSSGKSGEEKS). Residues 442-462 (LPLGISLPTLLSLGAGGWGVW) form a helical membrane-spanning segment. The Cytoplasmic portion of the chain corresponds to 463 to 498 (KYFIKPRRHPESELPLKQNISLQVNMGNATVVNAGQ).

It is found in the membrane. This is an uncharacterized protein from Arabidopsis thaliana (Mouse-ear cress).